A 448-amino-acid chain; its full sequence is Proline-rich protein 4 (448 aa).

A signal peptide spans 1 to 29 (MRILPEPRGSVPCLLLLVSVLLSATLSLA). A run of 46 repeats spans residues 152–156 (PMPKL), 157–161 (PPFKG), 165–169 (PFPLP), 170–174 (PPLEL), 175–179 (PPFLK), 183–187 (PPKYS), 188–193 (PPVEVP), 194–198 (PPVPV), 201–205 (PPPKK), 208–212 (PPPVP), 216–220 (PPPKK), 222–226 (VPPPV), 227–231 (PVYKP), 232–236 (PPKVE), 238–242 (PPPIP), 245–249 (PCPPK), 250–254 (PPKIE), 256–259 (PPPV), 260–264 (PVYKP), 265–270 (PPKIEK), 271–278 (PPPVPVYK), 279–284 (PPPKIE), 286–294 (PPPVPVHKL), 295–299 (PKKPC), 300–304 (PPKKV), 306–311 (PPPVPV), 314–320 (PPTKKPC), 321–327 (PPKKVDP), 328–334 (PPVPVHK), 335–341 (PPPKIVI), 342–348 (PPPKIEH), 349–356 (PPPVPVYK), 357–363 (PPPKIEH), 364–368 (PPIYI), 369–374 (PPIVKK), 378–384 (PPVPIYK), 385–389 (PPVVI), 390–394 (PKKPC), 395–402 (PPPVPVYK), 403–407 (PPVVV), 409–413 (PKKPC), 414–419 (PPLPQL), 420–424 (PPLPK), 425–429 (FPPLP), 430–434 (PKYIH), and 442–446 (PPLPP). A 46 X 5 AA approximate repeats region spans residues 152-446 (PMPKLPPFKG…KFGKWPPLPP (295 aa)). Pro residues predominate over residues 240 to 290 (PIPKKPCPPKPPKIEHPPPVPVYKPPPKIEKPPPVPVYKPPPKIEHPPPVP). The interval 240–345 (PIPKKPCPPK…PPKIVIPPPK (106 aa)) is disordered. 2 stretches are compositionally biased toward pro residues: residues 306–319 (PPPV…TKKP) and 327–345 (PPPV…PPPK).

It belongs to the plant proline-rich protein superfamily. Mostly expressed in aerial organs, particularly in expanding leaves, stems, flowers, and siliques. Also present in stipules.

Its subcellular location is the secreted. The protein resides in the cell wall. The protein is Proline-rich protein 4 (PRP4) of Arabidopsis thaliana (Mouse-ear cress).